The primary structure comprises 638 residues: Threonine--tRNA ligase (638 aa).

Residues 1–61 form the TGS domain; the sequence is MPLITLPDGN…DKDCSVKIFT (61 aa). The segment at 243–535 is catalytic; sequence DHRKLGKEMD…LIENYAGKFP (293 aa). Residues cysteine 335, histidine 386, and histidine 512 each contribute to the Zn(2+) site.

This sequence belongs to the class-II aminoacyl-tRNA synthetase family. Homodimer. Requires Zn(2+) as cofactor.

The protein localises to the cytoplasm. It catalyses the reaction tRNA(Thr) + L-threonine + ATP = L-threonyl-tRNA(Thr) + AMP + diphosphate + H(+). Catalyzes the attachment of threonine to tRNA(Thr) in a two-step reaction: L-threonine is first activated by ATP to form Thr-AMP and then transferred to the acceptor end of tRNA(Thr). Also edits incorrectly charged L-seryl-tRNA(Thr). This chain is Threonine--tRNA ligase, found in Pelagibacter ubique (strain HTCC1062).